We begin with the raw amino-acid sequence, 411 residues long: 2,3-bisphosphoglycerate-independent phosphoglycerate mutase (411 aa).

Belongs to the BPG-independent phosphoglycerate mutase family. A-PGAM subfamily.

It catalyses the reaction (2R)-2-phosphoglycerate = (2R)-3-phosphoglycerate. It participates in carbohydrate degradation; glycolysis; pyruvate from D-glyceraldehyde 3-phosphate: step 3/5. Functionally, catalyzes the interconversion of 2-phosphoglycerate and 3-phosphoglycerate. In Thermococcus kodakarensis (strain ATCC BAA-918 / JCM 12380 / KOD1) (Pyrococcus kodakaraensis (strain KOD1)), this protein is 2,3-bisphosphoglycerate-independent phosphoglycerate mutase.